Here is a 113-residue protein sequence, read N- to C-terminus: Prefoldin subunit beta (113 aa).

Belongs to the prefoldin subunit beta family. In terms of assembly, heterohexamer of two alpha and four beta subunits.

The protein resides in the cytoplasm. Functionally, molecular chaperone capable of stabilizing a range of proteins. Seems to fulfill an ATP-independent, HSP70-like function in archaeal de novo protein folding. This chain is Prefoldin subunit beta, found in Methanococcus maripaludis (strain C7 / ATCC BAA-1331).